The sequence spans 215 residues: Protein FAM167A (215 aa).

Disordered stretches follow at residues 1-26 (MSVP…PPDD) and 63-109 (RPAA…LTTG). A coiled-coil region spans residues 124 to 157 (LRKELAEMRLQDQQLARQLMRLRGDINKLKIEQT).

The protein belongs to the FAM167 (SEC) family.

The sequence is that of Protein FAM167A (Fam167a) from Mus musculus (Mouse).